The chain runs to 330 residues: DNA-directed RNA polymerase subunit alpha (330 aa).

The tract at residues 1–236 (MQGSVTEFLK…EQLDAFVDLR (236 aa)) is alpha N-terminal domain (alpha-NTD). The tract at residues 250–330 (FDPILLRPVD…NWPPASIAED (81 aa)) is alpha C-terminal domain (alpha-CTD).

The protein belongs to the RNA polymerase alpha chain family. In terms of assembly, homodimer. The RNAP catalytic core consists of 2 alpha, 1 beta, 1 beta' and 1 omega subunit. When a sigma factor is associated with the core the holoenzyme is formed, which can initiate transcription.

The enzyme catalyses RNA(n) + a ribonucleoside 5'-triphosphate = RNA(n+1) + diphosphate. Its function is as follows. DNA-dependent RNA polymerase catalyzes the transcription of DNA into RNA using the four ribonucleoside triphosphates as substrates. The protein is DNA-directed RNA polymerase subunit alpha of Vibrio parahaemolyticus serotype O3:K6 (strain RIMD 2210633).